A 334-amino-acid polypeptide reads, in one-letter code: Holliday junction branch migration complex subunit RuvB (334 aa).

A large ATPase domain (RuvB-L) region spans residues 4–184; the sequence is ADRLIAADAQ…FGIVQRLEFY (181 aa). ATP contacts are provided by residues Ile23, Arg24, Gly65, Lys68, Thr69, Thr70, 131–133, Arg174, Tyr184, and Arg221; that span reads EDY. Position 69 (Thr69) interacts with Mg(2+). The segment at 185–255 is small ATPAse domain (RuvB-S); it reads QVADLQHIVG…VAAQALNMLD (71 aa). The head domain (RuvB-H) stretch occupies residues 258 to 334; it reads AAGFDYMDRK…YQHFGIDRAE (77 aa). DNA is bound by residues Arg294, Arg313, and Arg318.

This sequence belongs to the RuvB family. Homohexamer. Forms an RuvA(8)-RuvB(12)-Holliday junction (HJ) complex. HJ DNA is sandwiched between 2 RuvA tetramers; dsDNA enters through RuvA and exits via RuvB. An RuvB hexamer assembles on each DNA strand where it exits the tetramer. Each RuvB hexamer is contacted by two RuvA subunits (via domain III) on 2 adjacent RuvB subunits; this complex drives branch migration. In the full resolvosome a probable DNA-RuvA(4)-RuvB(12)-RuvC(2) complex forms which resolves the HJ.

It is found in the cytoplasm. It carries out the reaction ATP + H2O = ADP + phosphate + H(+). In terms of biological role, the RuvA-RuvB-RuvC complex processes Holliday junction (HJ) DNA during genetic recombination and DNA repair, while the RuvA-RuvB complex plays an important role in the rescue of blocked DNA replication forks via replication fork reversal (RFR). RuvA specifically binds to HJ cruciform DNA, conferring on it an open structure. The RuvB hexamer acts as an ATP-dependent pump, pulling dsDNA into and through the RuvAB complex. RuvB forms 2 homohexamers on either side of HJ DNA bound by 1 or 2 RuvA tetramers; 4 subunits per hexamer contact DNA at a time. Coordinated motions by a converter formed by DNA-disengaged RuvB subunits stimulates ATP hydrolysis and nucleotide exchange. Immobilization of the converter enables RuvB to convert the ATP-contained energy into a lever motion, pulling 2 nucleotides of DNA out of the RuvA tetramer per ATP hydrolyzed, thus driving DNA branch migration. The RuvB motors rotate together with the DNA substrate, which together with the progressing nucleotide cycle form the mechanistic basis for DNA recombination by continuous HJ branch migration. Branch migration allows RuvC to scan DNA until it finds its consensus sequence, where it cleaves and resolves cruciform DNA. The sequence is that of Holliday junction branch migration complex subunit RuvB from Edwardsiella ictaluri (strain 93-146).